The chain runs to 324 residues: Mitochondrial thiamine pyrophosphate carrier 1 (324 aa).

Solcar repeat units follow at residues Gly-12–Ala-110, Pro-119–Pro-205, and Pro-212–Leu-307. 6 helical membrane-spanning segments follow: residues Ile-15–Leu-35, Ile-79–Ile-99, Phe-125–Leu-145, Thr-182–Leu-202, Ala-218–Val-238, and Gly-282–Trp-299.

This sequence belongs to the mitochondrial carrier (TC 2.A.29) family.

Its subcellular location is the mitochondrion inner membrane. Functionally, mitochondrial transporter that mediates uptake of thiamine pyrophosphate (ThPP) into mitochondria. This Ajellomyces capsulatus (strain NAm1 / WU24) (Darling's disease fungus) protein is Mitochondrial thiamine pyrophosphate carrier 1 (TPC1).